Here is a 674-residue protein sequence, read N- to C-terminus: UvrABC system protein C (674 aa).

Residues 64–142 form the GIY-YIG domain; it reads NGPGVYRMLN…IKRLRPRFNV (79 aa). Positions 252–287 constitute a UVR domain; sequence QAVKATIASAMAEASENLDFERAALYRDRLAALSHV.

This sequence belongs to the UvrC family. As to quaternary structure, interacts with UvrB in an incision complex.

It is found in the cytoplasm. The UvrABC repair system catalyzes the recognition and processing of DNA lesions. UvrC both incises the 5' and 3' sides of the lesion. The N-terminal half is responsible for the 3' incision and the C-terminal half is responsible for the 5' incision. This is UvrABC system protein C from Rhizobium meliloti (strain 1021) (Ensifer meliloti).